The primary structure comprises 350 residues: Protein RecA (350 aa).

68 to 75 (GPESSGKT) lines the ATP pocket.

The protein belongs to the RecA family.

The protein localises to the cytoplasm. In terms of biological role, can catalyze the hydrolysis of ATP in the presence of single-stranded DNA, the ATP-dependent uptake of single-stranded DNA by duplex DNA, and the ATP-dependent hybridization of homologous single-stranded DNAs. It interacts with LexA causing its activation and leading to its autocatalytic cleavage. In Mycolicibacterium gilvum (strain PYR-GCK) (Mycobacterium gilvum (strain PYR-GCK)), this protein is Protein RecA.